Reading from the N-terminus, the 533-residue chain is Neuropilin and tolloid-like protein 1 (533 aa).

Positions 1-22 (MIYGRSLFHIIASLIILHSSGA) are cleaved as a signal peptide. Topologically, residues 23–344 (TKKGTEKQIT…LDQLTNTSGT (322 aa)) are extracellular. 7 cysteine pairs are disulfide-bonded: Cys41/Cys68, Cys96/Cys118, Cys172/Cys202, Cys229/Cys251, Cys292/Cys304, Cys299/Cys317, and Cys311/Cys326. CUB domains are found at residues 41 to 155 (CGTW…YNFT) and 172 to 287 (CEFE…FTSF). Residues 291 to 327 (PCEGNTFFCHSNMCINNTLVCNGLQNCVYPWDENHCK) form the LDL-receptor class A domain. N-linked (GlcNAc...) asparagine glycosylation is present at Asn306. N-linked (GlcNAc...) asparagine glycosylation is present at Asn340. The chain crosses the membrane as a helical span at residues 345–365 (VIGVTSCIVIILIIVSVIVQI). Residues 366-533 (KQPRKKYVQR…HESEYNTTRV (168 aa)) lie on the Cytoplasmic side of the membrane. Residue Tyr417 is modified to Phosphotyrosine. Positions 531–533 (TRV) match the PDZ-binding motif.

In terms of assembly, interacts with PLZ domains of DLG2, DLG3 and DLG4 via its C-terminal TRV domain. Interacts with GRIN2A and GRIN2B via its CUB domains. As to expression, expressed only in brain. Present throughout the central nervous system. Highly expressed in the hippocampal CA3 region, olfactory bulb and tubercle, caudate putamen, and neocortex in the adult brain.

It localises to the membrane. The protein resides in the postsynaptic density membrane. Involved in the development and/or maintenance of neuronal circuitry. Accessory subunit of the neuronal N-methyl-D-aspartate receptor (NMDAR) critical for maintaining the abundance of GRIN2A-containing NMDARs in the postsynaptic density. Regulates long-term NMDA receptor-dependent synaptic plasticity and cognition, at least in the context of spatial learning and memory. The sequence is that of Neuropilin and tolloid-like protein 1 (Neto1) from Mus musculus (Mouse).